A 416-amino-acid chain; its full sequence is N-carbamoyl-L-amino-acid amidohydrolase (416 aa).

Residues His87, Asp98, Glu133, and His194 each coordinate a divalent metal cation. Residues Gln197, His230, Asn279, Arg292, and Gly361 each coordinate an N-carbamoyl-L-alpha-amino acid. Positions His213–Pro331 are involved in dimerization. A divalent metal cation is bound at residue His386.

Belongs to the peptidase M20 family. In terms of assembly, homodimer. Mn(2+) serves as cofactor. The cofactor is Ni(2+). Co(2+) is required as a cofactor. Requires Fe(2+) as cofactor.

The catalysed reaction is an N-carbamoyl-L-alpha-amino acid + H2O + 2 H(+) = an L-alpha-amino acid + NH4(+) + CO2. It carries out the reaction N-carbamoyl-L-methionine + H2O + 2 H(+) = L-methionine + NH4(+) + CO2. The enzyme catalyses N-acetyl-L-methionine + H2O = L-methionine + acetate. It catalyses the reaction N(alpha)-formyl-L-methionine + H2O = formate + L-methionine. The catalysed reaction is N-carbamoyl-L-alanine + H2O + 2 H(+) = L-alanine + NH4(+) + CO2. It carries out the reaction N-carbamoyl-L-cysteine + H2O + 2 H(+) = L-cysteine + NH4(+) + CO2. The enzyme catalyses N-carbamoyl-L-tryptophan + H2O + 2 H(+) = L-tryptophan + NH4(+) + CO2. It catalyses the reaction N-carbamoyl-L-valine + H2O + 2 H(+) = L-valine + NH4(+) + CO2. The catalysed reaction is N-carbamoyl-L-phenylalanine + H2O + 2 H(+) = L-phenylalanine + NH4(+) + CO2. Its activity is regulated as follows. Strongly inhibited by Hg(2+), Cu(2+), Zn(2+), Pb(2+) and Fe(3+) ions, and slightly inhibited by Na(+) and K(+) ions. Beta-mercaptoethanol and 5,5'-dithiobis-(2-nitrobenzoic acid)(DTNB) cause 34% and 42% inhibition, respectively. Functionally, catalyzes the hydrolysis of both aliphatic and aromatic N-carbamoyl-L-alpha-amino acids to free L-alpha-amino acids. Is strictly L-specific since it is inactive toward N-carbamoyl-D-alpha-amino acids. Is also able to hydrolyze N-formyl-L-methionine and N-acetyl-L-methionine, but not ureidosuccinate or 3-ureidopropanoate. The chain is N-carbamoyl-L-amino-acid amidohydrolase from Rhizobium meliloti (Ensifer meliloti).